A 312-amino-acid polypeptide reads, in one-letter code: tRNA dimethylallyltransferase (312 aa).

An ATP-binding site is contributed by 18-25 (GPTASGKS). 20–25 (TASGKS) is a substrate binding site. Interaction with substrate tRNA stretches follow at residues 43 to 46 (DSMQ) and 167 to 171 (QRILR).

This sequence belongs to the IPP transferase family. As to quaternary structure, monomer. It depends on Mg(2+) as a cofactor.

The enzyme catalyses adenosine(37) in tRNA + dimethylallyl diphosphate = N(6)-dimethylallyladenosine(37) in tRNA + diphosphate. Catalyzes the transfer of a dimethylallyl group onto the adenine at position 37 in tRNAs that read codons beginning with uridine, leading to the formation of N6-(dimethylallyl)adenosine (i(6)A). The chain is tRNA dimethylallyltransferase from Azorhizobium caulinodans (strain ATCC 43989 / DSM 5975 / JCM 20966 / LMG 6465 / NBRC 14845 / NCIMB 13405 / ORS 571).